The primary structure comprises 318 residues: L-carnitine dehydrogenase (318 aa).

14 to 19 (GSGVIG) contributes to the NAD(+) binding site.

It belongs to the 3-hydroxyacyl-CoA dehydrogenase family. L-carnitine dehydrogenase subfamily. In terms of assembly, homodimer.

It localises to the cytoplasm. It carries out the reaction carnitine + NAD(+) = 3-dehydrocarnitine + NADH + H(+). Its pathway is amine and polyamine metabolism; carnitine metabolism. In terms of biological role, catalyzes the NAD(+)-dependent oxidation of L-carnitine to 3-dehydrocarnitine. This chain is L-carnitine dehydrogenase, found in Pseudomonas syringae pv. syringae (strain B728a).